We begin with the raw amino-acid sequence, 274 residues long: Beta-lysine N(6)-acetyltransferase (274 aa).

Residues phenylalanine 123 to glutamate 274 form the N-acetyltransferase domain.

Belongs to the acetyltransferase family.

The enzyme catalyses (3S)-3,6-diaminohexanoate + acetyl-CoA = (3S)-6-acetamido-3-aminohexanoate + CoA + H(+). Its function is as follows. Catalyzes the acetylation of beta-lysine to N6-acetyl-beta-lysine, a compatible solute produced by methanogenic archaea that helps cells to cope with salt stress. This chain is Beta-lysine N(6)-acetyltransferase, found in Methanococcus maripaludis (strain DSM 14266 / JCM 13030 / NBRC 101832 / S2 / LL).